We begin with the raw amino-acid sequence, 578 residues long: 2-succinyl-5-enolpyruvyl-6-hydroxy-3-cyclohexene-1-carboxylate synthase (578 aa).

Belongs to the TPP enzyme family. MenD subfamily. As to quaternary structure, homodimer. Mg(2+) serves as cofactor. Requires Mn(2+) as cofactor. Thiamine diphosphate is required as a cofactor.

The catalysed reaction is isochorismate + 2-oxoglutarate + H(+) = 5-enolpyruvoyl-6-hydroxy-2-succinyl-cyclohex-3-ene-1-carboxylate + CO2. The protein operates within quinol/quinone metabolism; 1,4-dihydroxy-2-naphthoate biosynthesis; 1,4-dihydroxy-2-naphthoate from chorismate: step 2/7. It participates in quinol/quinone metabolism; menaquinone biosynthesis. Its function is as follows. Catalyzes the thiamine diphosphate-dependent decarboxylation of 2-oxoglutarate and the subsequent addition of the resulting succinic semialdehyde-thiamine pyrophosphate anion to isochorismate to yield 2-succinyl-5-enolpyruvyl-6-hydroxy-3-cyclohexene-1-carboxylate (SEPHCHC). This is 2-succinyl-5-enolpyruvyl-6-hydroxy-3-cyclohexene-1-carboxylate synthase from Bacillus velezensis (strain DSM 23117 / BGSC 10A6 / LMG 26770 / FZB42) (Bacillus amyloliquefaciens subsp. plantarum).